A 33-amino-acid polypeptide reads, in one-letter code: Photosystem II reaction center protein Psb30 (33 aa).

Residues 5 to 25 form a helical membrane-spanning segment; the sequence is LIAQLTFLTSIIVSGPLVIAL.

It belongs to the Psb30/Ycf12 family. In terms of assembly, PSII is composed of 1 copy each of membrane proteins PsbA, PsbB, PsbC, PsbD, PsbE, PsbF, PsbH, PsbI, PsbJ, PsbK, PsbL, PsbM, PsbT, PsbX, PsbY, PsbZ, Psb30/Ycf12, peripheral proteins of the oxygen-evolving complex and a large number of cofactors. It forms dimeric complexes.

The protein localises to the plastid. The protein resides in the chloroplast thylakoid membrane. A core subunit of photosystem II (PSII), probably helps stabilize the reaction center. The chain is Photosystem II reaction center protein Psb30 from Psilotum nudum (Whisk fern).